Reading from the N-terminus, the 517-residue chain is Cytochrome P450 monooxygenase bsc11 (517 aa).

Residues 16–33 form a helical membrane-spanning segment; the sequence is ALPLTCTGLIIIFAFYLS. Asn204 carries N-linked (GlcNAc...) asparagine glycosylation. A heme-binding site is contributed by Cys448.

It belongs to the cytochrome P450 family. It depends on heme as a cofactor.

It is found in the membrane. It functions in the pathway mycotoxin biosynthesis. Cytochrome P450 monooxygenase; part of the gene cluster that mediates the biosynthesis of the diterpene glucoside brassicicene C. In the first step of the brassicicene C biosynthesis, the bifunctional diterpene synthase bsc8 that possesses both prenyl transferase and terpene cyclase activity, converts isopentenyl diphosphate and dimethylallyl diphosphate into geranylgeranyl diphosphate (GGDP) that is further converted into fusicocca-2,10(14)-diene, the first precursor for brassicicene C. Fusicocca-2,10(14)-diene is then substrate of cytochrome P450 monooxygenase bsc1 for hydroxylation at the C-8 position. Oxidation at C-16 position to aldehyde is then catalyzed by the cytochrome P450 monooyxygenase bsc7, yielding fusicocca-2,10(14)-diene-8-beta,16-diol. Follows the isomerization of the double bond and reduction of aldehyde to alcohol catalyzed by the short-chain dehydrogenase/reductase bsc3 to yield the diol compound fusicocca-1,10(14)-diene-8 beta,16-diol. The next step is the oxidation at the C-3 position of fusicocca-2,10(14)-diene-8-beta,16-diol catalyzed by the alpha-ketoglutarate dependent dioxygenase bsc9, to produce a triol compound. Methylation of the hydroxy group at position 16 is performed by the methyltransferase bsc6. 16-O-methylation is followed by oxidation at the C-13 position to ketone and an alkyl shift of the methyl group leads to brassicicene C. Although the probable acetyltransferase bsc4 is included in the gene cluster, no acetylation reactions are necessary for brassicicene C biosynthesis. However, the fact that brassicicene E, which is a structurally related compound having an acetoxy group at position 12, was previously isolated from another strain of A.brassicicola suggests that the ATCC 96836 strain might also produce a small amount of brassicicene E. The polypeptide is Cytochrome P450 monooxygenase bsc11 (Alternaria brassicicola (Dark leaf spot agent)).